A 282-amino-acid chain; its full sequence is HTH-type transcriptional activator RhaR (282 aa).

An HTH araC/xylS-type domain is found at 179–277 (DKLITALANS…GMTPSQWRHL (99 aa)). 2 DNA-binding regions (H-T-H motif) span residues 196–217 (DAFC…RAQT) and 244–267 (ISEI…TRET).

As to quaternary structure, binds DNA as a dimer.

Its subcellular location is the cytoplasm. Activates expression of the rhaSR operon in response to L-rhamnose. This chain is HTH-type transcriptional activator RhaR, found in Salmonella agona (strain SL483).